We begin with the raw amino-acid sequence, 82 residues long: MSSAWTLSPEPLPPSTGPPVGAGLDVEQRTVFAFVLCLLVVLVLLMVRCVRILLDPYSRMPASSWTDHKEALERGQFDYALV.

The segment at 1 to 20 (MSSAWTLSPEPLPPSTGPPV) is disordered. The helical transmembrane segment at 30 to 50 (TVFAFVLCLLVVLVLLMVRCV) threads the bilayer.

This sequence belongs to the cortexin family.

It is found in the membrane. May mediate extracellular or intracellular signaling of cortical neurons during forebrain development. The chain is Cortexin-1 (Ctxn1) from Mus musculus (Mouse).